The following is a 477-amino-acid chain: Cytoplasmic 60S subunit biogenesis factor ZNF622 (477 aa).

At Ala2 the chain carries N-acetylalanine. 2 U1-type zinc fingers span residues 4–28 (YTCITCRVAFRDADMQRAHYKTDWH) and 67–91 (TYCTVCSKKFASFNAYENHLKSRRH). Positions 135–212 (AIKAQPSMSP…EDLDGDDWED (78 aa)) are disordered. Residues 167–178 (GTHDRDPSEKPP) are compositionally biased toward basic and acidic residues. A compositionally biased stretch (acidic residues) spans 196–212 (EDSEEEEEDLDGDDWED). Residue Ser276 is modified to Phosphoserine.

It belongs to the REI1 family. As to quaternary structure, homo- and heterodimer. Associates with pre-60S ribosomal particles. Interacts with MELK and MYBL2. Interacts with DNAJC21. In terms of processing, phosphorylated by MELK. The phosphorylation may redirect the protein to the nucleus. Post-translationally, ubiquitinated by HECTD1, leading to its degradation. As to expression, expressed in lung, kidney, spleen, liver and brain with lowest expression in kidney.

The protein resides in the cytoplasm. It localises to the nucleus. In terms of biological role, pre-60S-associated cytoplasmic factor involved in the cytoplasmic maturation of the 60S subunit. The sequence is that of Cytoplasmic 60S subunit biogenesis factor ZNF622 from Homo sapiens (Human).